A 305-amino-acid chain; its full sequence is Flagellin FlaB2 (305 aa).

A propeptide spans 1–18 (propeptide); the sequence is MGLQKIVKKYNKKMKRKG.

It belongs to the archaeal flagellin family. In terms of processing, glycosylated.

The protein resides in the archaeal flagellum. Functionally, flagellin is the subunit protein which polymerizes to form the filaments of archaeal flagella. The polypeptide is Flagellin FlaB2 (Saccharolobus shibatae (strain ATCC 51178 / DSM 5389 / JCM 8931 / NBRC 15437 / B12) (Sulfolobus shibatae)).